A 312-amino-acid chain; its full sequence is Putative S-adenosyl-L-methionine-dependent methyltransferase BCG_1768c (312 aa).

S-adenosyl-L-methionine is bound by residues aspartate 130 and 159–160 (DL).

Belongs to the UPF0677 family.

Its function is as follows. Exhibits S-adenosyl-L-methionine-dependent methyltransferase activity. This is Putative S-adenosyl-L-methionine-dependent methyltransferase BCG_1768c from Mycobacterium bovis (strain BCG / Pasteur 1173P2).